The primary structure comprises 512 residues: MSKKPVMLMILDGFGISPNKEGNAVAAANKPNYDRLFNKYPHTELQASGLEVGLPEGQMGNSEVGHLNIGAGRIIYQELTRITKEIKEGTFFTNKALVKAMDEAKENNTSLHLMGLLSNGGVHSHIDHLKGLLELAKKKGLQKVYVHAFMDGRDVAPSSGKEFIVELENAMKEIGVGEIATISGRYYAMDRDNRWERVELAYNAMVLGEGEKASSAVEAIEKSYHDNKTDEFVLPTVIEEDGHPVSRIKDGDSVIFFNFRPDRAREITRAIVDPEFKGFERKQLHVNFVCMTQYDKTLECVDVAYRPENYTNTLGEYVASKGLNQLRIAETEKYAHVTFFFNGGVEQPNTNEDRALIASPKVATYDLKPEMSAYEVTDELIKRLDEDKYDMIILNFANPDMVGHTGVQEAAVKAIEAVDECLGKVADKVLEKEGTLFITADHGNAEVMIDYSTGKPMTAHTSDPVPFLWISKDAEGKSLKDGGKLADIAPTMLTVMGLEVPSEMTGTCLLNK.

The Mn(2+) site is built by Asp12 and Ser62. The Phosphoserine intermediate role is filled by Ser62. Residues His123, 153–154, Arg185, Arg191, 260–263, and Lys333 contribute to the substrate site; these read RD and RPDR. Mn(2+)-binding residues include Asp400, His404, Asp441, His442, and His460.

The protein belongs to the BPG-independent phosphoglycerate mutase family. As to quaternary structure, monomer. Mn(2+) serves as cofactor.

The enzyme catalyses (2R)-2-phosphoglycerate = (2R)-3-phosphoglycerate. The protein operates within carbohydrate degradation; glycolysis; pyruvate from D-glyceraldehyde 3-phosphate: step 3/5. Functionally, catalyzes the interconversion of 2-phosphoglycerate and 3-phosphoglycerate. This chain is 2,3-bisphosphoglycerate-independent phosphoglycerate mutase, found in Clostridium perfringens (strain SM101 / Type A).